A 449-amino-acid polypeptide reads, in one-letter code: UDP-glycosyltransferase 74F2 (449 aa).

Residues Ser-273, 325–327 (SPQ), 342–350 (HCGWNSTME), and 364–367 (WTDQ) each bind UDP-alpha-D-glucose.

Belongs to the UDP-glycosyltransferase family. As to expression, expressed in seedlings.

Glycosyltransferase that glucosylates benzoic acid and derivatives. Substrate preference is benzoic acid &gt; salicylic acid (SA) &gt; 3-hydroxybenzoic acid &gt; 4-hydroxybenzoic acid. Catalyzes the formation of both SA 2-O-beta-D-glucoside (SAG) and SA glucose ester (SGE). Has high affinity for the tryptophan precursor anthranilate. Catalyzes the formation of anthranilate glucose ester. Is the major source of this activity in the plant. The chain is UDP-glycosyltransferase 74F2 (UGT74F2) from Arabidopsis thaliana (Mouse-ear cress).